Consider the following 442-residue polypeptide: tRNA modification GTPase MnmE (442 aa).

(6S)-5-formyl-5,6,7,8-tetrahydrofolate-binding residues include R27, E84, and K124. One can recognise a TrmE-type G domain in the interval 221–366 (GLHVVIVGAP…LLDALQAFAE (146 aa)). GTP is bound by residues 231–236 (NAGKSS), 250–256 (SKEAGTT), and 275–278 (DTAG). Mg(2+)-binding residues include S235 and T256. K442 lines the (6S)-5-formyl-5,6,7,8-tetrahydrofolate pocket.

Belongs to the TRAFAC class TrmE-Era-EngA-EngB-Septin-like GTPase superfamily. TrmE GTPase family. In terms of assembly, homodimer. Heterotetramer of two MnmE and two MnmG subunits. K(+) is required as a cofactor.

The protein localises to the cytoplasm. Functionally, exhibits a very high intrinsic GTPase hydrolysis rate. Involved in the addition of a carboxymethylaminomethyl (cmnm) group at the wobble position (U34) of certain tRNAs, forming tRNA-cmnm(5)s(2)U34. In Brucella canis (strain ATCC 23365 / NCTC 10854 / RM-666), this protein is tRNA modification GTPase MnmE.